The primary structure comprises 363 residues: Hydroxycarboxylic acid receptor 2 (363 aa).

The Extracellular segment spans residues 1–33 (MNRHHLQDHFLEIDKKNCCVFRDDFIVKVLPPV). The chain crosses the membrane as a helical span at residues 34–54 (LGLEFIFGLLGNGLALWIFCF). Residues 55–63 (HLKSWKSSR) are Cytoplasmic-facing. The helical transmembrane segment at 64–84 (IFLFNLAVADFLLIICLPFLM) threads the bilayer. The Extracellular portion of the chain corresponds to 85-102 (DNYVRRWDWKFGDIPCRL). Residues Cys100 and Cys177 are joined by a disulfide bond. A helical membrane pass occupies residues 103-123 (MLFMLAMNRQGSIIFLTVVAV). The Cytoplasmic portion of the chain corresponds to 124-142 (DRYFRVVHPHHALNKISNR). Residues 143 to 163 (TAAIISCLLWGITIGLTVHLL) form a helical membrane-spanning segment. At 164–192 (KKKMPIQNGGANLCSSFSICHTFQWHEAM) the chain is on the extracellular side. Residues 193-213 (FLLEFFLPLGIILFCSARIIW) traverse the membrane as a helical segment. Residues 214 to 229 (SLRQRQMDRHAKIKRA) are Cytoplasmic-facing. A helical transmembrane segment spans residues 230–250 (ITFIMVVAIVFVICFLPSVVV). Over 251-273 (RIRIFWLLHTSGTQNCEVYRSVD) the chain is Extracellular. A helical membrane pass occupies residues 274–294 (LAFFITLSFTYMNSMLDPVVY). Residues 295-363 (YFSSPSFPNF…SPSYLGPTSP (69 aa)) are Cytoplasmic-facing. The segment at 319 to 363 (GEPDNNRSTSVELTGDPNKTRGAPEALMANSGEPWSPSYLGPTSP) is disordered. Ser328 carries the phosphoserine modification.

It belongs to the G-protein coupled receptor 1 family. In terms of tissue distribution, expression largely restricted to adipose tissue and spleen. Expressed on mature neutrophils but not on immature neutrophils or eosinophils.

The protein resides in the cell membrane. Functionally, acts as a high affinity receptor for both nicotinic acid (also known as niacin) and (D)-beta-hydroxybutyrate and mediates increased adiponectin secretion and decreased lipolysis through G(i)-protein-mediated inhibition of adenylyl cyclase. This pharmacological effect requires nicotinic acid doses that are much higher than those provided by a normal diet. Mediates nicotinic acid-induced apoptosis in mature neutrophils. Receptor activation by nicotinic acid results in reduced cAMP levels which may affect activity of cAMP-dependent protein kinase A and phosphorylation of target proteins, leading to neutrophil apoptosis. The rank order of potency for the displacement of nicotinic acid binding is 5-methyl pyrazole-3-carboxylic acid = pyridine-3-acetic acid &gt; acifran &gt; 5-methyl nicotinic acid = acipimox &gt;&gt; nicotinuric acid = nicotinamide. The sequence is that of Hydroxycarboxylic acid receptor 2 (HCAR2) from Homo sapiens (Human).